The primary structure comprises 537 residues: Glucose-6-phosphate isomerase (537 aa).

The active-site Proton donor is Glu-341. Active-site residues include His-372 and Lys-501.

Belongs to the GPI family.

It localises to the cytoplasm. It carries out the reaction alpha-D-glucose 6-phosphate = beta-D-fructose 6-phosphate. Its pathway is carbohydrate biosynthesis; gluconeogenesis. The protein operates within carbohydrate degradation; glycolysis; D-glyceraldehyde 3-phosphate and glycerone phosphate from D-glucose: step 2/4. Catalyzes the reversible isomerization of glucose-6-phosphate to fructose-6-phosphate. The protein is Glucose-6-phosphate isomerase of Jannaschia sp. (strain CCS1).